The primary structure comprises 157 residues: Transcription elongation factor GreA (157 aa).

Belongs to the GreA/GreB family.

Its function is as follows. Necessary for efficient RNA polymerase transcription elongation past template-encoded arresting sites. The arresting sites in DNA have the property of trapping a certain fraction of elongating RNA polymerases that pass through, resulting in locked ternary complexes. Cleavage of the nascent transcript by cleavage factors such as GreA or GreB allows the resumption of elongation from the new 3'terminus. GreA releases sequences of 2 to 3 nucleotides. The polypeptide is Transcription elongation factor GreA (Hyphomonas neptunium (strain ATCC 15444)).